Here is a 153-residue protein sequence, read N- to C-terminus: Regulatory protein RecX (153 aa).

The protein belongs to the RecX family.

Its subcellular location is the cytoplasm. Its function is as follows. Modulates RecA activity. The chain is Regulatory protein RecX from Neisseria gonorrhoeae (strain ATCC 700825 / FA 1090).